The following is a 290-amino-acid chain: Light-independent protochlorophyllide reductase iron-sulfur ATP-binding protein (290 aa).

Residues 10–15 (GIGKST) and Lys-39 each bind ATP. Ser-14 serves as a coordination point for Mg(2+). [4Fe-4S] cluster contacts are provided by Cys-95 and Cys-129. Residue 180–181 (NR) coordinates ATP.

It belongs to the NifH/BchL/ChlL family. Homodimer. Protochlorophyllide reductase is composed of three subunits; ChlL, ChlN and ChlB. It depends on [4Fe-4S] cluster as a cofactor.

The protein localises to the plastid. The protein resides in the chloroplast. It carries out the reaction chlorophyllide a + oxidized 2[4Fe-4S]-[ferredoxin] + 2 ADP + 2 phosphate = protochlorophyllide a + reduced 2[4Fe-4S]-[ferredoxin] + 2 ATP + 2 H2O. It functions in the pathway porphyrin-containing compound metabolism; chlorophyll biosynthesis (light-independent). Component of the dark-operative protochlorophyllide reductase (DPOR) that uses Mg-ATP and reduced ferredoxin to reduce ring D of protochlorophyllide (Pchlide) to form chlorophyllide a (Chlide). This reaction is light-independent. The L component serves as a unique electron donor to the NB-component of the complex, and binds Mg-ATP. The sequence is that of Light-independent protochlorophyllide reductase iron-sulfur ATP-binding protein from Zygnema circumcarinatum (Green alga).